The sequence spans 253 residues: UPF0246 protein Swit_4565 (253 aa).

This sequence belongs to the UPF0246 family.

The polypeptide is UPF0246 protein Swit_4565 (Rhizorhabdus wittichii (strain DSM 6014 / CCUG 31198 / JCM 15750 / NBRC 105917 / EY 4224 / RW1) (Sphingomonas wittichii)).